We begin with the raw amino-acid sequence, 83 residues long: Hepcidin (83 aa).

A signal peptide spans 1–23; the sequence is MALSTRTQAACLLLLLLASLSST. A propeptide spanning residues 24–53 is cleaved from the precursor; that stretch reads TYLHQQMRQTTELQPLHGEESRADIAIPMQ. 4 disulfides stabilise this stretch: Cys-65/Cys-81, Cys-68/Cys-71, Cys-69/Cys-77, and Cys-72/Cys-80.

This sequence belongs to the hepcidin family. In terms of assembly, interacts with SLC40A1; this interaction promotes SLC40A1 rapid ubiquitination. As to expression, highly expressed in the liver and to a much lesser extent in the heart. Secreted in blood.

The protein localises to the secreted. In terms of biological role, liver-produced hormone that constitutes the main circulating regulator of iron absorption and distribution across tissues. Acts by promoting endocytosis and degradation of SLC40A1, leading to the retention of iron in iron-exporting cells and decreased flow of iron into plasma. Controls the major flows of iron into plasma: absorption of dietary iron in the intestine, recycling of iron by macrophages, which phagocytose old erythrocytes and other cells, and mobilization of stored iron from hepatocytes. This is Hepcidin (Hamp) from Mus musculus (Mouse).